Here is a 256-residue protein sequence, read N- to C-terminus: Probable succinate transporter subunit YjjP (256 aa).

Topologically, residues 1-113 are cytoplasmic; sequence MQTEQQRAVT…KRFSQIQPLR (113 aa). Residues 114–135 traverse the membrane as a helical segment; sequence YPRWLVALMVGLSCACFCKLNN. Over 136-140 the chain is Periplasmic; sequence GGWDG. Residues 141 to 158 traverse the membrane as a helical segment; the sequence is AVITFFASTTAMYIRQLL. The Cytoplasmic segment spans residues 159–168; it reads AQRHLHPQIN. Residues 169–189 form a helical membrane-spanning segment; the sequence is FCLTAFAATTISGLLLQLPTF. Residues 190-194 are Periplasmic-facing; it reads SNTPT. The chain crosses the membrane as a helical span at residues 195-215; the sequence is IAMAASVLLLVPGFPLINAVA. The Cytoplasmic segment spans residues 216–228; sequence DMFKGHINTGLAR. The chain crosses the membrane as a helical span at residues 229–249; that stretch reads WAIASLLTLATCVGVVMALTI. Over 250–256 the chain is Periplasmic; it reads WGLRGWV.

This sequence belongs to the ThrE exporter (TC 2.A.79) family. The transporter is composed of YjjB and YjjP.

It localises to the cell inner membrane. Functionally, involved in succinate export with YjjB. Both proteins are required for export. Contributes to succinate production under both aerobic and anaerobic conditions. This is Probable succinate transporter subunit YjjP (yjjP) from Escherichia coli (strain K12).